The following is a 463-amino-acid chain: L-seryl-tRNA(Sec) selenium transferase (463 aa).

Lys-295 is subject to N6-(pyridoxal phosphate)lysine.

This sequence belongs to the SelA family. As to quaternary structure, homodecamer; pentamer of dimers. Binds only one seryl-tRNA(Sec) per dimer. The cofactor is pyridoxal 5'-phosphate.

It localises to the cytoplasm. It carries out the reaction L-seryl-tRNA(Sec) + selenophosphate + H(+) = L-selenocysteinyl-tRNA(Sec) + phosphate. It participates in aminoacyl-tRNA biosynthesis; selenocysteinyl-tRNA(Sec) biosynthesis; selenocysteinyl-tRNA(Sec) from L-seryl-tRNA(Sec) (bacterial route): step 1/1. Its function is as follows. Converts seryl-tRNA(Sec) to selenocysteinyl-tRNA(Sec) required for selenoprotein biosynthesis. This Escherichia coli (strain 55989 / EAEC) protein is L-seryl-tRNA(Sec) selenium transferase.